Here is a 166-residue protein sequence, read N- to C-terminus: MACVNEPSPKLQKLDRNGIHGDSSPSPFFKVKKLSEKAVIPTRGSPLSAGYDLSSAVDSKVPARGKALIPTDLSIAVPEGTYARIAPRSGLAWKHSIDVGAGVIDADYRGPVGVILFNHSDADFEVKFGDRIAQLIIEKIVTPDVVEVDDLDETVRGDGGFGSTGV.

Positions 1-24 are disordered; that stretch reads MACVNEPSPKLQKLDRNGIHGDSS. Residue E138 participates in Mg(2+) binding.

Belongs to the dUTPase family. Homotrimer. Mg(2+) is required as a cofactor.

It catalyses the reaction dUTP + H2O = dUMP + diphosphate + H(+). It participates in pyrimidine metabolism; dUMP biosynthesis; dUMP from dCTP (dUTP route): step 2/2. Functionally, this enzyme is involved in nucleotide metabolism: it produces dUMP, the immediate precursor of thymidine nucleotides and it decreases the intracellular concentration of dUTP, preventing uracil incorporation into DNA. The protein is Deoxyuridine 5'-triphosphate nucleotidohydrolase (DUT) of Arabidopsis thaliana (Mouse-ear cress).